The primary structure comprises 442 residues: Inhibitor of Apoptosis OPG037 (442 aa).

ANK repeat units follow at residues D67 to A96, H100 to N131, D203 to K233, F237 to D267, Y292 to D321, and M323 to S347.

This sequence belongs to the orthopoxvirus OPG037 family. As to quaternary structure, may interact with host caspase-9-Apaf-1 complex.

It is found in the host cytoplasm. Inhibits host apoptosis. Acts by associating with host apoptosome. The protein is Inhibitor of Apoptosis OPG037 (OPG037) of Monkeypox virus.